The chain runs to 701 residues: Octapeptide-repeat antigen (701 aa).

Residues asparagine 40, asparagine 41, asparagine 76, asparagine 111, asparagine 127, asparagine 139, asparagine 181, asparagine 189, asparagine 311, asparagine 334, asparagine 344, asparagine 477, and asparagine 557 are each glycosylated (N-linked (GlcNAc...) asparagine). Residues 120–140 are disordered; that stretch reads IENEEKSNGSRKSSNKQKYNE. Residues 641-701 are disordered; it reads LSGSSTGSMN…IKSGSKDHIK (61 aa). Residues 642 to 655 show a composition bias toward low complexity; that stretch reads SGSSTGSMNNGKSG. Tandem repeats lie at residues 653-660, 661-668, 669-676, 677-684, 685-692, and 693-700. The segment at 653-700 is 6 X 8 AA approximate tandem repeats; that stretch reads KSGSKSDIKGGSKDDIKSGSKDDIKSGSKADIKSGSKDDIKSGSKDHI. Over residues 656–701 the composition is skewed to basic and acidic residues; that stretch reads SKSDIKGGSKDDIKSGSKDDIKSGSKADIKSGSKDDIKSGSKDHIK.

This sequence belongs to the ATP-dependent AMP-binding enzyme family.

The protein localises to the parasitophorous vacuole. In Plasmodium falciparum (isolate NF7 / Ghana), this protein is Octapeptide-repeat antigen.